We begin with the raw amino-acid sequence, 120 residues long: Large ribosomal subunit protein uL18 (120 aa).

It belongs to the universal ribosomal protein uL18 family. In terms of assembly, part of the 50S ribosomal subunit; part of the 5S rRNA/L5/L18/L25 subcomplex. Contacts the 5S and 23S rRNAs.

This is one of the proteins that bind and probably mediate the attachment of the 5S RNA into the large ribosomal subunit, where it forms part of the central protuberance. The protein is Large ribosomal subunit protein uL18 of Chloroherpeton thalassium (strain ATCC 35110 / GB-78).